A 79-amino-acid polypeptide reads, in one-letter code: Delta-hormotoxin-Cpt1a (79 aa).

The N-terminal stretch at 1–20 (MKTQVLAVFVLCVLFCLAES) is a signal peptide. The propeptide occupies 21–31 (RTTLNKRIDIA). Disulfide bonds link C36–C75, C38–C66, and C56–C76.

It belongs to the sea anemone sodium channel inhibitory toxin family.

Its subcellular location is the secreted. It is found in the nematocyst. Functionally, in neuromuscular preparation of crustaceans, the toxin increased neurotransmitter release, causing repetitive firing of the axons. May affect sodium channels (Nav). The polypeptide is Delta-hormotoxin-Cpt1a (Calliactis parasitica (Sea anemone)).